Consider the following 1388-residue polypeptide: DNA-directed RNA polymerase subunit beta' (1388 aa).

4 residues coordinate Zn(2+): C70, C72, C85, and C88. Mg(2+) contacts are provided by D461, D463, and D465. Residues C808, C882, C889, and C892 each contribute to the Zn(2+) site.

Belongs to the RNA polymerase beta' chain family. As to quaternary structure, the RNAP catalytic core consists of 2 alpha, 1 beta, 1 beta' and 1 omega subunit. When a sigma factor is associated with the core the holoenzyme is formed, which can initiate transcription. Mg(2+) is required as a cofactor. Zn(2+) serves as cofactor.

The catalysed reaction is RNA(n) + a ribonucleoside 5'-triphosphate = RNA(n+1) + diphosphate. Functionally, DNA-dependent RNA polymerase catalyzes the transcription of DNA into RNA using the four ribonucleoside triphosphates as substrates. This Acidiphilium cryptum (strain JF-5) protein is DNA-directed RNA polymerase subunit beta'.